Consider the following 173-residue polypeptide: Streptothricin acetyltransferase A (173 aa).

The 153-residue stretch at 21–173 (VVFGRMIPAF…EIAIFWYYKF (153 aa)) folds into the N-acetyltransferase domain.

Belongs to the acetyltransferase family. GNAT subfamily. In terms of assembly, homodimer.

It catalyses the reaction streptothricin D + acetyl-CoA = N(beta)-acetylstreptothricin D + CoA + H(+). The catalysed reaction is streptothricin F + acetyl-CoA = N(beta)-acetylstreptothricin F + CoA + H(+). In terms of biological role, involved in resistance to streptothricin, a broad-spectrum antibiotic produced by streptomycetes. Detoxifies streptothricin via acetylation of the beta amino group of the first beta-lysyl moiety of streptothricin. This chain is Streptothricin acetyltransferase A, found in Bacillus subtilis (strain 168).